Consider the following 32-residue polypeptide: Cytochrome b6-f complex subunit 8 (32 aa).

A helical transmembrane segment spans residues 6–26 (IVSLAWAALMVVFTFSLSLVV).

Belongs to the PetN family. The 4 large subunits of the cytochrome b6-f complex are cytochrome b6, subunit IV (17 kDa polypeptide, PetD), cytochrome f and the Rieske protein, while the 4 small subunits are PetG, PetL, PetM and PetN. The complex functions as a dimer.

Its subcellular location is the plastid. The protein localises to the chloroplast thylakoid membrane. Functionally, component of the cytochrome b6-f complex, which mediates electron transfer between photosystem II (PSII) and photosystem I (PSI), cyclic electron flow around PSI, and state transitions. The polypeptide is Cytochrome b6-f complex subunit 8 (Illicium oligandrum (Star anise)).